Here is a 140-residue protein sequence, read N- to C-terminus: PDZ domain-containing protein 11 (140 aa).

In terms of domain architecture, PDZ spans Thr47 to Tyr129.

In terms of assembly, interacts with ATP2B1, ATP2B2, ATP2B3, ATP2B4 and ATP7A. Interacts with PLEKHA7 (via WW domains) at zonula adherens; this interaction is essential for the interaction between PLEKHA7 and the ADAM10-binding protein TSPAN33. Interacts with SLC5A6. As to expression, widely expressed (at protein level).

The protein localises to the secreted. It is found in the cytoplasm. The protein resides in the cell junction. Its subcellular location is the adherens junction. It localises to the cell membrane. Functionally, mediates docking of ADAM10 to zonula adherens by interacting with PLEKHA7 which is required for PLEKHA7 to interact with the ADAM10-binding protein TSPAN33. In Homo sapiens (Human), this protein is PDZ domain-containing protein 11 (PDZD11).